A 212-amino-acid polypeptide reads, in one-letter code: Peptide methionine sulfoxide reductase MsrA (212 aa).

Residue Cys-52 is part of the active site.

This sequence belongs to the MsrA Met sulfoxide reductase family.

The enzyme catalyses L-methionyl-[protein] + [thioredoxin]-disulfide + H2O = L-methionyl-(S)-S-oxide-[protein] + [thioredoxin]-dithiol. The catalysed reaction is [thioredoxin]-disulfide + L-methionine + H2O = L-methionine (S)-S-oxide + [thioredoxin]-dithiol. In terms of biological role, has an important function as a repair enzyme for proteins that have been inactivated by oxidation. Catalyzes the reversible oxidation-reduction of methionine sulfoxide in proteins to methionine. The chain is Peptide methionine sulfoxide reductase MsrA from Salmonella choleraesuis (strain SC-B67).